A 185-amino-acid chain; its full sequence is Ribosome-recycling factor (185 aa).

The disordered stretch occupies residues 137–158 (DELKKLEKDHTASEDEVKRAQD).

This sequence belongs to the RRF family.

Its subcellular location is the cytoplasm. Functionally, responsible for the release of ribosomes from messenger RNA at the termination of protein biosynthesis. May increase the efficiency of translation by recycling ribosomes from one round of translation to another. The protein is Ribosome-recycling factor of Desulfitobacterium hafniense (strain Y51).